A 376-amino-acid chain; its full sequence is MAAAAGVAAGTGRGSGEGEELLPNAVEGDGGCGGGGTCAGDRPWRLNFDGLRRPEAHQEKPPRRFHDRLGGLVQSPGDDVAEYYQQQSELLEGFNEMDTLTDRGFLPGMSKEECEKVARSEALAIRLSNIANMVLFAAKVYASIRSGSLAIIASTLDSLLDLLSGFILWFTAFSKKTSNPYRYPIGKRRMQPLGILVFASVMATLGLQIILESTRSLFYDGDTFRLTKEQEKWVVDIMLSVTSVKLLLVVYCRSFTNEILAIYTIRTWSMTVLENVHSLVGQSASPEYLQKLTYLCWNHHKAVRHIDTVRAYTFGSHYFVEVDIVLPCDMPLQEAHDIGEAPQEKLESLPEIERAFVHLDYEFTHQPEHARSHDTL.

Residues 1–28 (MAAAAGVAAGTGRGSGEGEELLPNAVEG) form a disordered region. Residues 1-123 (MAAAAGVAAG…CEKVARSEAL (123 aa)) lie on the Cytoplasmic side of the membrane. Residues 124 to 144 (AIRLSNIANMVLFAAKVYASI) form a helical membrane-spanning segment. At 145–149 (RSGSL) the chain is on the vacuolar side. Residues 150–170 (AIIASTLDSLLDLLSGFILWF) form a helical membrane-spanning segment. Topologically, residues 171–191 (TAFSKKTSNPYRYPIGKRRMQ) are cytoplasmic. The chain crosses the membrane as a helical span at residues 192 to 212 (PLGILVFASVMATLGLQIILE). Residues 213–231 (STRSLFYDGDTFRLTKEQE) lie on the Vacuolar side of the membrane. The helical transmembrane segment at 232–252 (KWVVDIMLSVTSVKLLLVVYC) threads the bilayer. The Cytoplasmic segment spans residues 253–376 (RSFTNEILAI…PEHARSHDTL (124 aa)).

The protein belongs to the cation diffusion facilitator (CDF) transporter (TC 2.A.4) family. SLC30A subfamily.

It is found in the vacuole membrane. Functionally, involved in sequestration of excess metal in the cytoplasm into vacuoles to maintain metal homeostasis. The chain is Metal tolerance protein 6 (MTP6) from Oryza sativa subsp. japonica (Rice).